A 359-amino-acid polypeptide reads, in one-letter code: Probable dual-specificity RNA methyltransferase RlmN (359 aa).

Glutamate 91 functions as the Proton acceptor in the catalytic mechanism. Positions 97–329 constitute a Radical SAM core domain; sequence QHYGHSVCVT…KKNGVNCVVR (233 aa). Cysteine 104 and cysteine 340 form a disulfide bridge. Cysteine 111, cysteine 115, and cysteine 118 together coordinate [4Fe-4S] cluster. S-adenosyl-L-methionine contacts are provided by residues 163 to 164, serine 195, 218 to 220, and asparagine 296; these read GE and SLH. Cysteine 340 acts as the S-methylcysteine intermediate in catalysis.

This sequence belongs to the radical SAM superfamily. RlmN family. [4Fe-4S] cluster serves as cofactor.

The protein localises to the cytoplasm. The enzyme catalyses adenosine(2503) in 23S rRNA + 2 reduced [2Fe-2S]-[ferredoxin] + 2 S-adenosyl-L-methionine = 2-methyladenosine(2503) in 23S rRNA + 5'-deoxyadenosine + L-methionine + 2 oxidized [2Fe-2S]-[ferredoxin] + S-adenosyl-L-homocysteine. The catalysed reaction is adenosine(37) in tRNA + 2 reduced [2Fe-2S]-[ferredoxin] + 2 S-adenosyl-L-methionine = 2-methyladenosine(37) in tRNA + 5'-deoxyadenosine + L-methionine + 2 oxidized [2Fe-2S]-[ferredoxin] + S-adenosyl-L-homocysteine. In terms of biological role, specifically methylates position 2 of adenine 2503 in 23S rRNA and position 2 of adenine 37 in tRNAs. The chain is Probable dual-specificity RNA methyltransferase RlmN from Streptococcus pyogenes serotype M3 (strain ATCC BAA-595 / MGAS315).